Here is a 322-residue protein sequence, read N- to C-terminus: Ribose-phosphate pyrophosphokinase 1 (322 aa).

ATP contacts are provided by residues 39–41 (DGE) and 98–99 (RQ). Residues His132 and Asp173 each contribute to the Mg(2+) site. The active site involves Lys196. D-ribose 5-phosphate-binding positions include Arg198, Asp224, and 228–232 (DTAGT).

The protein belongs to the ribose-phosphate pyrophosphokinase family. Class I subfamily. Homohexamer. Mg(2+) serves as cofactor.

It localises to the cytoplasm. It catalyses the reaction D-ribose 5-phosphate + ATP = 5-phospho-alpha-D-ribose 1-diphosphate + AMP + H(+). It participates in metabolic intermediate biosynthesis; 5-phospho-alpha-D-ribose 1-diphosphate biosynthesis; 5-phospho-alpha-D-ribose 1-diphosphate from D-ribose 5-phosphate (route I): step 1/1. Functionally, involved in the biosynthesis of the central metabolite phospho-alpha-D-ribosyl-1-pyrophosphate (PRPP) via the transfer of pyrophosphoryl group from ATP to 1-hydroxyl of ribose-5-phosphate (Rib-5-P). The chain is Ribose-phosphate pyrophosphokinase 1 from Streptococcus pneumoniae serotype 4 (strain ATCC BAA-334 / TIGR4).